Consider the following 547-residue polypeptide: Myrosinase 2 (547 aa).

A signal peptide spans 1–28 (MQHNTYIYILTMKLLGFALAILLVVATC). Cystine bridges form between cysteine 36-cysteine 460, cysteine 44-cysteine 456, and cysteine 236-cysteine 244. Residues glutamine 69, histidine 171, and 216-217 (NQ) contribute to the a beta-D-glucoside site. The N-linked (GlcNAc...) asparagine glycan is linked to asparagine 340. Tyrosine 359 contacts a beta-D-glucoside. N-linked (GlcNAc...) asparagine glycosylation is present at asparagine 384. A beta-D-glucoside contacts are provided by residues glutamate 430, tryptophan 479, 486 to 487 (EF), and phenylalanine 495. Residue glutamate 430 is the Nucleophile of the active site. N-linked (GlcNAc...) asparagine glycosylation is present at asparagine 504.

This sequence belongs to the glycosyl hydrolase 1 family. As to quaternary structure, interacts with MVP1. As to expression, expressed in phloem-associated cells.

It carries out the reaction a thioglucoside + H2O = a sugar + a thiol.. Functionally, may degrade glucosinolates (glucose residue linked by a thioglucoside bound to an amino acid derivative) to glucose, sulfate and any of the products: thiocyanates, isothiocyanates, nitriles, epithionitriles or oxazolidine-2-thiones. These toxic degradation products can deter insect herbivores. Seems to function in abscisic acid (ABA) and methyl jasmonate (MeJA) signaling in guard cells. Functionally redundant with TGG1. In Arabidopsis thaliana (Mouse-ear cress), this protein is Myrosinase 2.